Consider the following 240-residue polypeptide: Ribonuclease PH (240 aa).

Phosphate-binding positions include Arg-87 and Gly-125–Arg-127.

This sequence belongs to the RNase PH family. Homohexameric ring arranged as a trimer of dimers.

It carries out the reaction tRNA(n+1) + phosphate = tRNA(n) + a ribonucleoside 5'-diphosphate. In terms of biological role, phosphorolytic 3'-5' exoribonuclease that plays an important role in tRNA 3'-end maturation. Removes nucleotide residues following the 3'-CCA terminus of tRNAs; can also add nucleotides to the ends of RNA molecules by using nucleoside diphosphates as substrates, but this may not be physiologically important. Probably plays a role in initiation of 16S rRNA degradation (leading to ribosome degradation) during starvation. This is Ribonuclease PH from Ruminiclostridium cellulolyticum (strain ATCC 35319 / DSM 5812 / JCM 6584 / H10) (Clostridium cellulolyticum).